The following is a 279-amino-acid chain: Probable endonuclease 4 (279 aa).

Residues His-69, His-109, Glu-145, Asp-179, His-182, His-216, Asp-229, His-231, and Glu-261 each coordinate Zn(2+).

The protein belongs to the AP endonuclease 2 family. Zn(2+) serves as cofactor.

The enzyme catalyses Endonucleolytic cleavage to 5'-phosphooligonucleotide end-products.. Functionally, endonuclease IV plays a role in DNA repair. It cleaves phosphodiester bonds at apurinic or apyrimidinic (AP) sites, generating a 3'-hydroxyl group and a 5'-terminal sugar phosphate. This is Probable endonuclease 4 from Chlorobium luteolum (strain DSM 273 / BCRC 81028 / 2530) (Pelodictyon luteolum).